Consider the following 399-residue polypeptide: Elongation factor Tu (399 aa).

In terms of domain architecture, tr-type G spans 10-204 (KPHVNIGTIG…AVDASIPEPE (195 aa)). Residues 19–26 (GHVDHGKT) form a G1 region. Position 19–26 (19–26 (GHVDHGKT)) interacts with GTP. T26 serves as a coordination point for Mg(2+). Residues 60-64 (GITIN) are G2. A G3 region spans residues 81 to 84 (DCPG). Residues 81–85 (DCPGH) and 136–139 (NKCD) contribute to the GTP site. The interval 136–139 (NKCD) is G4. A G5 region spans residues 174-176 (SGL).

This sequence belongs to the TRAFAC class translation factor GTPase superfamily. Classic translation factor GTPase family. EF-Tu/EF-1A subfamily. As to quaternary structure, monomer.

It localises to the cytoplasm. It catalyses the reaction GTP + H2O = GDP + phosphate + H(+). Functionally, GTP hydrolase that promotes the GTP-dependent binding of aminoacyl-tRNA to the A-site of ribosomes during protein biosynthesis. The protein is Elongation factor Tu of Synechococcus sp. (strain CC9902).